A 554-amino-acid polypeptide reads, in one-letter code: Arginine--tRNA ligase (554 aa).

The short motif at Ala130–His140 is the 'HIGH' region element.

It belongs to the class-I aminoacyl-tRNA synthetase family. In terms of assembly, monomer.

It localises to the cytoplasm. The enzyme catalyses tRNA(Arg) + L-arginine + ATP = L-arginyl-tRNA(Arg) + AMP + diphosphate. In Staphylococcus carnosus (strain TM300), this protein is Arginine--tRNA ligase.